A 763-amino-acid polypeptide reads, in one-letter code: Elongation factor G, mitochondrial (763 aa).

The transit peptide at 1–52 (MFMRLKVLEMNSIRRQTLLRQFTNVYNVVSRSARLCSQAIPKRLFYSTGSRA) directs the protein to the mitochondrion. One can recognise a tr-type G domain in the interval 60–347 (SRLRNIGISA…AVCDYLPNPS (288 aa)). Residues 69–76 (AHIDSGKT), 145–149 (DTPGH), and 199–202 (NKMD) each bind GTP.

Belongs to the TRAFAC class translation factor GTPase superfamily. Classic translation factor GTPase family. EF-G/EF-2 subfamily.

The protein localises to the mitochondrion. It functions in the pathway protein biosynthesis; polypeptide chain elongation. Functionally, mitochondrial GTPase that catalyzes the GTP-dependent ribosomal translocation step during translation elongation. During this step, the ribosome changes from the pre-translocational (PRE) to the post-translocational (POST) state as the newly formed A-site-bound peptidyl-tRNA and P-site-bound deacylated tRNA move to the P and E sites, respectively. Catalyzes the coordinated movement of the two tRNA molecules, the mRNA and conformational changes in the ribosome. The sequence is that of Elongation factor G, mitochondrial (mef1) from Schizosaccharomyces japonicus (strain yFS275 / FY16936) (Fission yeast).